A 466-amino-acid chain; its full sequence is UDP-glycosyltransferase 79 (466 aa).

Residue histidine 27 is the Proton acceptor of the active site. UDP-alpha-D-glucose is bound at residue histidine 27. Aspartate 120 functions as the Charge relay in the catalytic mechanism. Positions 142, 291, 343, 344, 361, 364, 365, 366, 369, 385, and 386 each coordinate UDP-alpha-D-glucose. UDP is bound by residues threonine 291, phenylalanine 343, cysteine 344, and histidine 361. Positions 365, 366, and 369 each coordinate UDP.

It belongs to the UDP-glycosyltransferase family.

Involved in the detoxification of the Fusarium mycotoxin deoxynivalenol by the transfer of glucose from UDP-D-glucose to the hydroxyl group at C-3, forming deoxynivalenol-3-O-beta-D-glucoside. This chain is UDP-glycosyltransferase 79, found in Oryza sativa subsp. japonica (Rice).